Consider the following 295-residue polypeptide: Bifunctional protein FolD (295 aa).

NADP(+) is bound by residues 166–168 (GRS), serine 191, and isoleucine 232.

The protein belongs to the tetrahydrofolate dehydrogenase/cyclohydrolase family. As to quaternary structure, homodimer.

The enzyme catalyses (6R)-5,10-methylene-5,6,7,8-tetrahydrofolate + NADP(+) = (6R)-5,10-methenyltetrahydrofolate + NADPH. The catalysed reaction is (6R)-5,10-methenyltetrahydrofolate + H2O = (6R)-10-formyltetrahydrofolate + H(+). The protein operates within one-carbon metabolism; tetrahydrofolate interconversion. In terms of biological role, catalyzes the oxidation of 5,10-methylenetetrahydrofolate to 5,10-methenyltetrahydrofolate and then the hydrolysis of 5,10-methenyltetrahydrofolate to 10-formyltetrahydrofolate. The sequence is that of Bifunctional protein FolD from Wolbachia pipientis subsp. Culex pipiens (strain wPip).